The sequence spans 81 residues: ATP synthase subunit c, chloroplastic (81 aa).

The next 2 helical transmembrane spans lie at 7–27 (AASV…PGIG) and 57–77 (LAFM…LLFA).

Belongs to the ATPase C chain family. F-type ATPases have 2 components, F(1) - the catalytic core - and F(0) - the membrane proton channel. F(1) has five subunits: alpha(3), beta(3), gamma(1), delta(1), epsilon(1). F(0) has four main subunits: a(1), b(1), b'(1) and c(10-14). The alpha and beta chains form an alternating ring which encloses part of the gamma chain. F(1) is attached to F(0) by a central stalk formed by the gamma and epsilon chains, while a peripheral stalk is formed by the delta, b and b' chains.

It localises to the plastid. The protein localises to the chloroplast thylakoid membrane. F(1)F(0) ATP synthase produces ATP from ADP in the presence of a proton or sodium gradient. F-type ATPases consist of two structural domains, F(1) containing the extramembraneous catalytic core and F(0) containing the membrane proton channel, linked together by a central stalk and a peripheral stalk. During catalysis, ATP synthesis in the catalytic domain of F(1) is coupled via a rotary mechanism of the central stalk subunits to proton translocation. Functionally, key component of the F(0) channel; it plays a direct role in translocation across the membrane. A homomeric c-ring of between 10-14 subunits forms the central stalk rotor element with the F(1) delta and epsilon subunits. The chain is ATP synthase subunit c, chloroplastic from Pelargonium hortorum (Common geranium).